Reading from the N-terminus, the 257-residue chain is Imidazole glycerol phosphate synthase subunit HisF (257 aa).

Residues D12 and D131 contribute to the active site.

It belongs to the HisA/HisF family. In terms of assembly, heterodimer of HisH and HisF.

It is found in the cytoplasm. The enzyme catalyses 5-[(5-phospho-1-deoxy-D-ribulos-1-ylimino)methylamino]-1-(5-phospho-beta-D-ribosyl)imidazole-4-carboxamide + L-glutamine = D-erythro-1-(imidazol-4-yl)glycerol 3-phosphate + 5-amino-1-(5-phospho-beta-D-ribosyl)imidazole-4-carboxamide + L-glutamate + H(+). The protein operates within amino-acid biosynthesis; L-histidine biosynthesis; L-histidine from 5-phospho-alpha-D-ribose 1-diphosphate: step 5/9. Functionally, IGPS catalyzes the conversion of PRFAR and glutamine to IGP, AICAR and glutamate. The HisF subunit catalyzes the cyclization activity that produces IGP and AICAR from PRFAR using the ammonia provided by the HisH subunit. This chain is Imidazole glycerol phosphate synthase subunit HisF, found in Paraburkholderia xenovorans (strain LB400).